The chain runs to 452 residues: COBRA-like protein 1 (452 aa).

A signal peptide spans 1–33 (MGFFLCSSSSIFFKFGISIIFLVSFSGLTPSEA). Residues Asn42, Asn167, Asn175, Asn214, Asn239, Asn254, Asn323, Asn338, and Asn357 are each glycosylated (N-linked (GlcNAc...) asparagine). Ser432 carries the GPI-anchor amidated serine lipid modification. Positions 433–452 (VGSLFAAMALLLIVFLHGNL) are cleaved as a propeptide — removed in mature form.

Belongs to the COBRA family. Expressed in roots, stems, leaves, flowers and siliques.

The protein localises to the cell membrane. The polypeptide is COBRA-like protein 1 (COBL1) (Arabidopsis thaliana (Mouse-ear cress)).